The primary structure comprises 178 residues: Large ribosomal subunit protein uL6 (178 aa).

This sequence belongs to the universal ribosomal protein uL6 family. Part of the 50S ribosomal subunit.

This protein binds to the 23S rRNA, and is important in its secondary structure. It is located near the subunit interface in the base of the L7/L12 stalk, and near the tRNA binding site of the peptidyltransferase center. The chain is Large ribosomal subunit protein uL6 from Lactococcus lactis subsp. cremoris (strain SK11).